Here is a 285-residue protein sequence, read N- to C-terminus: MLIIDGKKTAQDIRAELATEVTAATAEGRRAPGLAVILVGEDPASQVYVRNKEKACTEVGITSFAYRLPAETGQQELLDLIAECNARPDVDGILLQLPLPRGLDAQACLLAIDPAKDVDGFHPENVGRLSLGLPGFVSCTPAGVMELLRRYNLPTRGKKAVVVGRSDIVGKPLALLLTRSGEFGDATVTICHSRTPDLAEECRKADFLFLAVGRPRLITGDMVRQGAVVIDVGINRSDDGLCGDADYESVSKKAAAITPVPGGVGPMTIAMLLVNTVQSWRQRTA.

NADP(+) is bound by residues 164–166, S193, and I234; that span reads GRS.

Belongs to the tetrahydrofolate dehydrogenase/cyclohydrolase family. In terms of assembly, homodimer.

The catalysed reaction is (6R)-5,10-methylene-5,6,7,8-tetrahydrofolate + NADP(+) = (6R)-5,10-methenyltetrahydrofolate + NADPH. It catalyses the reaction (6R)-5,10-methenyltetrahydrofolate + H2O = (6R)-10-formyltetrahydrofolate + H(+). The protein operates within one-carbon metabolism; tetrahydrofolate interconversion. Catalyzes the oxidation of 5,10-methylenetetrahydrofolate to 5,10-methenyltetrahydrofolate and then the hydrolysis of 5,10-methenyltetrahydrofolate to 10-formyltetrahydrofolate. The chain is Bifunctional protein FolD from Desulfovibrio desulfuricans (strain ATCC 27774 / DSM 6949 / MB).